We begin with the raw amino-acid sequence, 58 residues long: Small ribosomal subunit protein bS21 (58 aa).

Positions 25–58 are disordered; it reads KAGTLQEARKREHYEKPSVKRKRKSEAARKRKKI. Basic and acidic residues predominate over residues 31–42; sequence EARKREHYEKPS. The segment covering 43–58 has biased composition (basic residues); sequence VKRKRKSEAARKRKKI.

Belongs to the bacterial ribosomal protein bS21 family.

In Streptococcus thermophilus (strain ATCC BAA-491 / LMD-9), this protein is Small ribosomal subunit protein bS21.